A 120-amino-acid chain; its full sequence is MAFTKSKQPRKQRKALFNAPLHLRRKVMSAMLSKELKEKLGKNAIPVRKGDVVRIMRGDFKGLEGEVIKVDLKRYRIYVEGANNKRQDGREVPYPIHPSNVMIIKLYDKDEKRFKHIKNE.

The protein belongs to the universal ribosomal protein uL24 family. In terms of assembly, part of the 50S ribosomal subunit.

One of two assembly initiator proteins, it binds directly to the 5'-end of the 23S rRNA, where it nucleates assembly of the 50S subunit. Its function is as follows. Located at the polypeptide exit tunnel on the outside of the subunit. The protein is Large ribosomal subunit protein uL24 of Methanocaldococcus jannaschii (strain ATCC 43067 / DSM 2661 / JAL-1 / JCM 10045 / NBRC 100440) (Methanococcus jannaschii).